Here is a 115-residue protein sequence, read N- to C-terminus: Nucleoid-associated protein Pro_0020 (115 aa).

Belongs to the YbaB/EbfC family. In terms of assembly, homodimer.

It is found in the cytoplasm. The protein localises to the nucleoid. In terms of biological role, binds to DNA and alters its conformation. May be involved in regulation of gene expression, nucleoid organization and DNA protection. The sequence is that of Nucleoid-associated protein Pro_0020 from Prochlorococcus marinus (strain SARG / CCMP1375 / SS120).